A 621-amino-acid polypeptide reads, in one-letter code: Rab proteins geranylgeranyltransferase component A 2 (621 aa).

Residues Val113–Ala171 form a disordered region. Residues Asp115 to Leu125 show a composition bias toward polar residues. A compositionally biased stretch (basic and acidic residues) spans Pro155–Leu166.

This sequence belongs to the Rab GDI family. As to quaternary structure, monomer. Heterotrimer composed of RABGGTA, RABGGTB and CHML; within this trimer, RABGGTA and RABGGTB form the catalytic component B, while CHML (component A) mediates Rab protein binding. Interacts with RAB1A, RAB7A and RAB27A, but has much lower affinity for RAB1A, RAB7A and RAB27A than CHM. Interacts with the non-phosphorylated forms of RAB3A, RAB3B, RAB3C, RAB3D, RAB5B, RAB5C, RAB8A, RAB8B, RAB10, RAB12, RAB35, and RAB43.

Its subcellular location is the cytoplasm. It is found in the cytosol. Substrate-binding subunit (component A) of the Rab geranylgeranyltransferase (GGTase) complex. Binds unprenylated Rab proteins and presents the substrate peptide to the catalytic component B. The component A is thought to be regenerated by transferring its prenylated Rab back to the donor membrane. Less effective than CHM in supporting prenylation of Rab3 family. This is Rab proteins geranylgeranyltransferase component A 2 (Chml) from Mus musculus (Mouse).